A 213-amino-acid chain; its full sequence is Thiamine-phosphate synthase (213 aa).

Residues Gln-40–Lys-44 and Asn-75 contribute to the 4-amino-2-methyl-5-(diphosphooxymethyl)pyrimidine site. Mg(2+)-binding residues include Asp-76 and Asp-95. Residue Ser-113 coordinates 4-amino-2-methyl-5-(diphosphooxymethyl)pyrimidine. Thr-139–Ser-141 is a 2-[(2R,5Z)-2-carboxy-4-methylthiazol-5(2H)-ylidene]ethyl phosphate binding site. Residue Lys-142 participates in 4-amino-2-methyl-5-(diphosphooxymethyl)pyrimidine binding. Residues Gly-171 and Ile-191 to Ser-192 each bind 2-[(2R,5Z)-2-carboxy-4-methylthiazol-5(2H)-ylidene]ethyl phosphate.

This sequence belongs to the thiamine-phosphate synthase family. Mg(2+) is required as a cofactor.

It catalyses the reaction 2-[(2R,5Z)-2-carboxy-4-methylthiazol-5(2H)-ylidene]ethyl phosphate + 4-amino-2-methyl-5-(diphosphooxymethyl)pyrimidine + 2 H(+) = thiamine phosphate + CO2 + diphosphate. The enzyme catalyses 2-(2-carboxy-4-methylthiazol-5-yl)ethyl phosphate + 4-amino-2-methyl-5-(diphosphooxymethyl)pyrimidine + 2 H(+) = thiamine phosphate + CO2 + diphosphate. The catalysed reaction is 4-methyl-5-(2-phosphooxyethyl)-thiazole + 4-amino-2-methyl-5-(diphosphooxymethyl)pyrimidine + H(+) = thiamine phosphate + diphosphate. Its pathway is cofactor biosynthesis; thiamine diphosphate biosynthesis; thiamine phosphate from 4-amino-2-methyl-5-diphosphomethylpyrimidine and 4-methyl-5-(2-phosphoethyl)-thiazole: step 1/1. Condenses 4-methyl-5-(beta-hydroxyethyl)thiazole monophosphate (THZ-P) and 2-methyl-4-amino-5-hydroxymethyl pyrimidine pyrophosphate (HMP-PP) to form thiamine monophosphate (TMP). This Staphylococcus aureus (strain MSSA476) protein is Thiamine-phosphate synthase.